The chain runs to 158 residues: GTP-dependent dephospho-CoA kinase (158 aa).

Residues Asp-35, Val-36, Asp-54, Lys-56, Glu-109, and Asp-132 each contribute to the GTP site.

It belongs to the GTP-dependent DPCK family.

The catalysed reaction is 3'-dephospho-CoA + GTP = GDP + CoA + H(+). It functions in the pathway cofactor biosynthesis; coenzyme A biosynthesis. Functionally, catalyzes the GTP-dependent phosphorylation of the 3'-hydroxyl group of dephosphocoenzyme A to form coenzyme A (CoA). This chain is GTP-dependent dephospho-CoA kinase, found in Methanococcus vannielii (strain ATCC 35089 / DSM 1224 / JCM 13029 / OCM 148 / SB).